Consider the following 1398-residue polypeptide: Disease resistance protein RPV1 (1398 aa).

The 164-residue stretch at 22–185 (TTYDVFLSFR…EITNSIFRQL (164 aa)) folds into the TIR domain. NAD(+)-binding positions include 31-36 (RGEDTR) and G63. Residue E97 is part of the active site. One can recognise an NB-ARC domain in the interval 201–440 (SHVKEMILRL…KRSYDGLDRI (240 aa)). LRR repeat units lie at residues 203-225 (VKEMILRLHLESSDVRMVGIYGV), 423-447 (KADIHKVLKRSYDGLDRIDKNIFLD), 478-504 (LNDLCLITLPYNQICMHDLIQQMGWEI), 535-560 (IKSVETMSLDLSKLKRVCSNSNVFAK), 610-632 (SYELRYLRWDGYPLDSLPLNFDG), 633-657 (GKLVELHLKCSNIKQLWQGHKDLER), 678-702 (MPNLERLCLSGCVSLIDIHPSVGNM), 703-726 (KKLTTLSLRSCNKLKNLPDSIGDL), 728-750 (SLESLYLSNCSKFEKFPEKGGNM), 751-773 (KSLTELDLKNTAIKDLPDSIGDL), 775-797 (SLESLYLSNCSKFEKFPEKGGNM), 798-820 (KSLTELDLKNTAIKDLPDSIGDL), 822-844 (SLEILNLSDCAKFEKFPEKGGNM), 845-867 (KSLKELDLQNTAIKDLPDSIGDL), 869-891 (SLKYLSLSDCSKFEKFPEKGGNM), 892-914 (KRLLQLILSNTAIKDLPDSIGDL), 916-938 (SLKYLYLSDCSKFEKFPEKGGNM), 939-961 (KSLTELDLKNTAIKDLPDSIGDL), 963-985 (SLEILNLSDCAKFEKFPEKGGNM), 986-1008 (KSLKELDLQNTAIKDLPDSIGDL), 1010-1032 (SLKYLYLSDCSKFEKFPEKGGNM), 1033-1055 (KSLLQLILSNTAIKDLPDSIGDL), 1079-1102 (MKSLRELGLRNTAIKDLPDSIGDL), and 1105-1128 (LEMLSLSNCPKFEVLPLSLKAIDA). Over residues 1315–1328 (QNSGDNGSALQDAN) the composition is skewed to polar residues. Residues 1315-1336 (QNSGDNGSALQDANGNVHGANQ) are disordered. The stretch at 1346–1369 (LDLLRNLSLGDNGSVVLEDTLGNR) is one LRR 25 repeat. The short motif at 1369–1373 (RKRRR) is the Nuclear localization signal element.

Belongs to the disease resistance TIR-NB-LRR family. Homodimer; homodimerization is required for NAD(+) hydrolase (NADase) activity.

It localises to the nucleus. The protein localises to the cytoplasm. The enzyme catalyses NAD(+) + H2O = ADP-D-ribose + nicotinamide + H(+). In terms of biological role, disease resistance (R) protein that confers resistance to multiple powdery and downy mildew by promoting cell death. Acts as a NAD(+) hydrolase (NADase): in response to activation, catalyzes cleavage of NAD(+) into ADP-D-ribose (ADPR) and nicotinamide; NAD(+) cleavage triggering a defense system that promotes cell death. This chain is Disease resistance protein RPV1, found in Vitis rotundifolia (Muscadine grape).